The primary structure comprises 358 residues: Peptide chain release factor 1 (358 aa).

N5-methylglutamine is present on Q236.

This sequence belongs to the prokaryotic/mitochondrial release factor family. In terms of processing, methylated by PrmC. Methylation increases the termination efficiency of RF1.

The protein localises to the cytoplasm. Functionally, peptide chain release factor 1 directs the termination of translation in response to the peptide chain termination codons UAG and UAA. The polypeptide is Peptide chain release factor 1 (Corynebacterium efficiens (strain DSM 44549 / YS-314 / AJ 12310 / JCM 11189 / NBRC 100395)).